A 447-amino-acid chain; its full sequence is N-succinylarginine dihydrolase (447 aa).

Substrate is bound by residues 21–30, Asn112, and 139–140; these read AGLAHGNVAS and HR. Glu176 is a catalytic residue. Residue Arg215 participates in substrate binding. Residue His251 is part of the active site. Residues Asp253 and Asn364 each contribute to the substrate site. Cys370 serves as the catalytic Nucleophile.

Belongs to the succinylarginine dihydrolase family. Homodimer.

It catalyses the reaction N(2)-succinyl-L-arginine + 2 H2O + 2 H(+) = N(2)-succinyl-L-ornithine + 2 NH4(+) + CO2. Its pathway is amino-acid degradation; L-arginine degradation via AST pathway; L-glutamate and succinate from L-arginine: step 2/5. In terms of biological role, catalyzes the hydrolysis of N(2)-succinylarginine into N(2)-succinylornithine, ammonia and CO(2). The protein is N-succinylarginine dihydrolase of Chromohalobacter salexigens (strain ATCC BAA-138 / DSM 3043 / CIP 106854 / NCIMB 13768 / 1H11).